Reading from the N-terminus, the 671-residue chain is Solute carrier family 53 member 1 (671 aa).

Positions 1–193 (MKFAEHLTAH…DIDRLIQETE (193 aa)) are important for promoting lysosomal/autophagosomal degradation of PXo bodies following inorganic phosphate (Pi) starvation. Residues 1–228 (MKFAEHLTAH…EQQSPWTTFK (228 aa)) lie on the Cytoplasmic side of the membrane. The region spanning 2 to 218 (KFAEHLTAHI…MKRLRVPPLG (217 aa)) is the SPX domain. An important for inositol polyphosphate binding region spans residues 152-159 (KILKKHDK). A helical membrane pass occupies residues 229-253 (VGLFSGAFVVLFITVVIAAMFYGFG). Residues 254–255 (EN) are Extracellular-facing. The chain crosses the membrane as a helical span at residues 256 to 287 (WRAGMRMFRAPFLIIECLFLWGVNVYGWRSSG). Residues 288–300 (VNHVLIFELDPRN) lie on the Cytoplasmic side of the membrane. Residues 301–328 (HLSEQNIMEVASVFGVIWACCVLSYIFC) traverse the membrane as a helical segment. Over 329–334 (DPLGIP) the chain is Extracellular. Residues 335–356 (QYAAPLCLYTLMAAFLLNPTKT) traverse the membrane as a helical segment. Residues 357 to 374 (FHHEARFWAIRILIRVIM) constitute an intramembrane region (helical). Over 375–379 (APFCF) the chain is Cytoplasmic. A discontinuously helical transmembrane segment spans residues 380 to 413 (VNFADFWLADQLNSMVPAFLDIPFLICFFGRSPT). Phosphate-binding residues include Asp-389 and Asn-392. Residues 414-415 (WH) are Extracellular-facing. Residues 416–455 (KAGKAASHCVEYVSLLHPIVAIMPAYFRFAQCIRRYRDTK) form a discontinuously helical membrane-spanning segment. In terms of domain architecture, EXS spans 423–627 (HCVEYVSLLH…DCSDQTTILR (205 aa)). Glu-456 is a topological domain (cytoplasmic). Residues 457-488 (SFPHLVNAAKYATSFFVVIFAHKYHTTTDTYP) form a helical membrane-spanning segment. Lys-466 and Tyr-467 together coordinate phosphate. Residues 489 to 491 (LSK) lie on the Extracellular side of the membrane. A helical transmembrane segment spans residues 492–519 (ENPWFYCWITAAIFSSCYAYTWDIKMDW). Over 520–538 (GLFDSKAGDNRFLREEIVY) the chain is Cytoplasmic. A discontinuously helical membrane pass occupies residues 539 to 570 (SSTWFYYFGIIEDLILRFSWTLSMSLIEAGYI). Arg-555, Arg-586, and Arg-587 together coordinate phosphate. Residues 571-609 (EGDVMMTILSPLEVFRRFIWNYFRLENEHLNNVGKFRAV) traverse the membrane as a helical segment. At 610–671 (RDISVAPMDC…QGESIEDLCS (62 aa)) the chain is on the cytoplasmic side.

It belongs to the SYG1 (TC 2.A.94) family. As to quaternary structure, homodimer. Interacts with the FAR/SIN/STRIPAK complex members Cka and Pp2A-29B. Detected in PXo bodies found in the enterocytes and progenitors of the midgut and in the hindgut, but rarely occur in the Malpighian tubules, crop, brain, muscles and germlines (at protein level).

It is found in the membrane. The enzyme catalyses phosphate(in) = phosphate(out). In terms of biological role, inorganic ion transporter that mediates phosphate ion export across the cell membrane. Plays a major role in phosphate homeostasis, preventing intracellular phosphate accumulation and possible calcium phosphate precipitation, ultimately preserving calcium signaling. Binds inositol hexakisphosphate (Ins6P) and similar inositol polyphosphates, such as 5-diphospho-inositol pentakisphosphate (5-InsP7), which are important intracellular signaling molecules involved in regulation of phosphate flux. In enterocytes and differentiating progenitors of the gut, promotes the biogenesis and maintenance of organelles called PXo bodies that store intracellular inorganic phosphate (Pi), and also regulates Cka-JNK mediated tissue homeostasis in response to Pi availability in these tissues. Under conditions of adequate Pi, transports Pi into PXo bodies which convert and store the Pi in the form of phospholipids. It also inhibits Cka at the post-transcriptional level to prevent Cka-bsk/JNK mediated cell proliferation. Upon Pi starvation, Pxo expression is down-regulated resulting in the PXo bodies decreasing in phospholipid content until they undergo lysosomal/autophagosomal degradation and release the stored Pi back into the cytosol for use by the cell. Decrease in Pxo expression also activates the Cka protein, which moves to the nucleus to activate bsk/JNK which then induces nearby progenitor cells to proliferate and form new absorptive cells, probably helping the organism to cope with the nutrient deficiency by maximizing absorption of dietary Pi. The polypeptide is Solute carrier family 53 member 1 (Drosophila melanogaster (Fruit fly)).